Here is a 248-residue protein sequence, read N- to C-terminus: Caffeoyl-CoA O-methyltransferase 3 (248 aa).

Residue K22 participates in substrate binding. S-adenosyl-L-methionine-binding positions include T64, E86, 88–89 (GV), S94, D112, and A141. D164 lines the substrate pocket. D164 contacts a divalent metal cation. D166 is an S-adenosyl-L-methionine binding site. A divalent metal cation-binding residues include D190 and N191. N195 contributes to the substrate binding site.

This sequence belongs to the class I-like SAM-binding methyltransferase superfamily. Cation-dependent O-methyltransferase family. CCoAMT subfamily. A divalent metal cation serves as cofactor. As to expression, mostly expressed in petal limbs and tubes, and, at low levels, in stems, roots and leaves.

It localises to the cytoplasm. It is found in the cytosol. The enzyme catalyses (E)-caffeoyl-CoA + S-adenosyl-L-methionine = (E)-feruloyl-CoA + S-adenosyl-L-homocysteine + H(+). The catalysed reaction is (E)-5-hydroxyferuloyl-CoA + S-adenosyl-L-methionine = (E)-sinapoyl-CoA + S-adenosyl-L-homocysteine + H(+). Its pathway is aromatic compound metabolism; phenylpropanoid biosynthesis. In terms of biological role, involved in the production of floral volatile phenylpropanoids in flowers of fragrant cultivars (e.g. cv. Mitchell and cv. V26) from cinnamic acid, a common precursor with the anthocyanin biosynthesis pathway involved in flower pigmentation. Methylates caffeoyl-CoA to feruloyl-CoA, also able to methylate 5-hydroxyferuloyl-CoA. The chain is Caffeoyl-CoA O-methyltransferase 3 from Petunia hybrida (Petunia).